The following is a 149-amino-acid chain: Oligosaccharyltransferase complex subunit OSTC (149 aa).

Topologically, residues 1–32 (MESLYRVPFLVLECPNLKLKKPPWVHMPSAMT) are cytoplasmic. A helical transmembrane segment spans residues 33 to 53 (VYALVVVSYFLITGGIIYDVI). The Extracellular portion of the chain corresponds to 54–83 (VEPPSVGSVTDEHGHQRPVAFLAYRVNGQY). The chain crosses the membrane as a helical span at residues 84 to 104 (IMEGLASSFLFTMGGLGFIIL). Topologically, residues 105-117 (DRSNAPNIPKLNR) are cytoplasmic. A helical membrane pass occupies residues 118-138 (FLLLFIGFVCVLLSFFMARVF). Over 139–149 (MRMKLPGYLMG) the chain is Extracellular.

Belongs to the OSTC family. In terms of assembly, component of STT3A-containing oligosaccharyl transferase (OST-A) complex. STT3A-containing complex assembly occurs through the formation of 3 subcomplexes. Subcomplex 1 contains RPN1 and TMEM258, subcomplex 2 contains the STT3A-specific subunits STT3A, DC2/OSTC, and KCP2 as well as the core subunit OST4, and subcomplex 3 contains RPN2, DAD1, and OST48. The OST-A complex can form stable complexes with the Sec61 complex or with both the Sec61 and TRAP complexes. Interacts with PSEN1 and NCSTN; indicative for an association with the gamma-secretase complex.

It is found in the endoplasmic reticulum. It localises to the membrane. Its pathway is protein modification; protein glycosylation. Functionally, subunit of STT3A-containing oligosaccharyl transferase (OST-A) complex that catalyzes the initial transfer of a defined glycan (Glc(3)Man(9)GlcNAc(2) in eukaryotes) from the lipid carrier dolichol-pyrophosphate to an asparagine residue within an Asn-X-Ser/Thr consensus motif in nascent polypeptide chains, the first step in protein N-glycosylation. N-glycosylation occurs cotranslationally and the complex associates with the Sec61 complex at the channel-forming translocon complex that mediates protein translocation across the endoplasmic reticulum (ER). Within the OST-A complex, acts as an adapter that anchors the OST-A complex to the Sec61 complex. May be involved in N-glycosylation of APP (amyloid-beta precursor protein). Can modulate gamma-secretase cleavage of APP by enhancing endoprotelysis of PSEN1. The sequence is that of Oligosaccharyltransferase complex subunit OSTC from Bos taurus (Bovine).